The following is a 165-amino-acid chain: MPASYSFDVVSDFDRQELVNTIDQVQREVSQRYDLKDSNTELNLVDEEIIIHTASDMTLKAVVDIVLQKATKRNLSLKIFDFQDPEASSGNRLKQVVLLKKGLAQDVAKKLSKSIRDQLKKVNVAIQGNSLRVTGKSKDDLQLAIEILRKQEDGLEIPLQFENYR.

It belongs to the YajQ family.

Its function is as follows. Nucleotide-binding protein. This is Nucleotide-binding protein Pro_0479 from Prochlorococcus marinus (strain SARG / CCMP1375 / SS120).